We begin with the raw amino-acid sequence, 183 residues long: Porphobilinogen deaminase (183 aa).

Belongs to the HMBS family. As to quaternary structure, monomer. The cofactor is dipyrromethane.

It carries out the reaction 4 porphobilinogen + H2O = hydroxymethylbilane + 4 NH4(+). It participates in porphyrin-containing compound metabolism; protoporphyrin-IX biosynthesis; coproporphyrinogen-III from 5-aminolevulinate: step 2/4. Functionally, tetrapolymerization of the monopyrrole PBG into the hydroxymethylbilane pre-uroporphyrinogen in several discrete steps. This chain is Porphobilinogen deaminase (hemC), found in Yersinia intermedia.